Consider the following 89-residue polypeptide: Putative RING finger protein 121R (89 aa).

The RING-type zinc finger occupies 45–78; sequence CPICLIAKVNTVLECTHVLCSNCVKKINVCPICR.

The polypeptide is Putative RING finger protein 121R (Invertebrate iridescent virus 6 (IIV-6)).